The following is a 374-amino-acid chain: uncharacterized protein (374 aa).

An N-terminal signal peptide occupies residues 1-26 (MNNLIKAYAAGVMSAAFLFGSEGRVR).

This is an uncharacterized protein from Treponema pallidum (strain Nichols).